A 656-amino-acid chain; its full sequence is Chaperone protein DnaK (656 aa).

Thr204 carries the post-translational modification Phosphothreonine; by autocatalysis. Positions 602–656 are disordered; sequence KLAERVYAKKGGAAGAPPGGEAEGEPQAQAGGKKEDVVDAEFEEVKDEKKKDEDK. Residues 620–632 show a composition bias toward low complexity; the sequence is GGEAEGEPQAQAG. Over residues 647-656 the composition is skewed to basic and acidic residues; it reads KDEKKKDEDK.

The protein belongs to the heat shock protein 70 family.

Acts as a chaperone. The polypeptide is Chaperone protein DnaK (Coxiella burnetii (strain CbuG_Q212) (Coxiella burnetii (strain Q212))).